A 267-amino-acid chain; its full sequence is L-aspartate dehydrogenase (267 aa).

The NAD(+) site is built by A124 and N190. The active site involves H220.

This sequence belongs to the L-aspartate dehydrogenase family.

It carries out the reaction L-aspartate + NADP(+) + H2O = oxaloacetate + NH4(+) + NADPH + H(+). It catalyses the reaction L-aspartate + NAD(+) + H2O = oxaloacetate + NH4(+) + NADH + H(+). The protein operates within cofactor biosynthesis; NAD(+) biosynthesis; iminoaspartate from L-aspartate (dehydrogenase route): step 1/1. Its function is as follows. Specifically catalyzes the NAD or NADP-dependent dehydrogenation of L-aspartate to iminoaspartate. The chain is L-aspartate dehydrogenase from Pseudomonas aeruginosa (strain ATCC 15692 / DSM 22644 / CIP 104116 / JCM 14847 / LMG 12228 / 1C / PRS 101 / PAO1).